The following is a 401-amino-acid chain: Dual-specificity RNA methyltransferase RlmN (401 aa).

Glutamate 114 serves as the catalytic Proton acceptor. The Radical SAM core domain occupies 120 to 365; sequence DKGRGTLCVS…TMVRRTRGDD (246 aa). The cysteines at positions 127 and 370 are disulfide-linked. Residues cysteine 134, cysteine 138, and cysteine 141 each coordinate [4Fe-4S] cluster. S-adenosyl-L-methionine is bound by residues 187-188, serine 219, 241-243, and asparagine 327; these read GE and SLH. Residue cysteine 370 is the S-methylcysteine intermediate of the active site.

The protein belongs to the radical SAM superfamily. RlmN family. Requires [4Fe-4S] cluster as cofactor.

It is found in the cytoplasm. It catalyses the reaction adenosine(2503) in 23S rRNA + 2 reduced [2Fe-2S]-[ferredoxin] + 2 S-adenosyl-L-methionine = 2-methyladenosine(2503) in 23S rRNA + 5'-deoxyadenosine + L-methionine + 2 oxidized [2Fe-2S]-[ferredoxin] + S-adenosyl-L-homocysteine. The enzyme catalyses adenosine(37) in tRNA + 2 reduced [2Fe-2S]-[ferredoxin] + 2 S-adenosyl-L-methionine = 2-methyladenosine(37) in tRNA + 5'-deoxyadenosine + L-methionine + 2 oxidized [2Fe-2S]-[ferredoxin] + S-adenosyl-L-homocysteine. Specifically methylates position 2 of adenine 2503 in 23S rRNA and position 2 of adenine 37 in tRNAs. m2A2503 modification seems to play a crucial role in the proofreading step occurring at the peptidyl transferase center and thus would serve to optimize ribosomal fidelity. This is Dual-specificity RNA methyltransferase RlmN from Xanthomonas axonopodis pv. citri (strain 306).